The chain runs to 128 residues: Holo-[acyl-carrier-protein] synthase (128 aa).

Mg(2+) contacts are provided by aspartate 8 and glutamate 60.

This sequence belongs to the P-Pant transferase superfamily. AcpS family. Mg(2+) is required as a cofactor.

The protein resides in the cytoplasm. It carries out the reaction apo-[ACP] + CoA = holo-[ACP] + adenosine 3',5'-bisphosphate + H(+). Functionally, transfers the 4'-phosphopantetheine moiety from coenzyme A to a Ser of acyl-carrier-protein. In Anaeromyxobacter dehalogenans (strain 2CP-1 / ATCC BAA-258), this protein is Holo-[acyl-carrier-protein] synthase.